We begin with the raw amino-acid sequence, 37 residues long: Large ribosomal subunit protein bL36 (37 aa).

The protein belongs to the bacterial ribosomal protein bL36 family.

The protein is Large ribosomal subunit protein bL36 of Aliarcobacter butzleri (strain RM4018) (Arcobacter butzleri).